Reading from the N-terminus, the 329-residue chain is NADH-quinone oxidoreductase subunit H (329 aa).

The next 9 membrane-spanning stretches (helical) occupy residues 9–29, 42–62, 75–95, 117–137, 154–174, 188–208, 238–258, 269–291, and 309–329; these read LIKILILVAVFSALGGFATYI, GPCYVGPFGLLQVAADGIKLF, FIFTLAPIIAMVSAFVSMAPI, IGFLFFLAVGSAGIYAPILAG, IQLLSFEVVSTLTILAPLMVV, GGFLDWLVFKQPLAFVLFLIA, LKWGMFFLAEYAHLFAFSFVI, WGFIPGGIAILIKAGFFVFLSMW, and WKIMLPLALLNIVLTGIIILI.

It belongs to the complex I subunit 1 family. As to quaternary structure, NDH-1 is composed of 14 different subunits. Subunits NuoA, H, J, K, L, M, N constitute the membrane sector of the complex.

Its subcellular location is the cell inner membrane. The enzyme catalyses a quinone + NADH + 5 H(+)(in) = a quinol + NAD(+) + 4 H(+)(out). NDH-1 shuttles electrons from NADH, via FMN and iron-sulfur (Fe-S) centers, to quinones in the respiratory chain. The immediate electron acceptor for the enzyme in this species is believed to be ubiquinone. Couples the redox reaction to proton translocation (for every two electrons transferred, four hydrogen ions are translocated across the cytoplasmic membrane), and thus conserves the redox energy in a proton gradient. This subunit may bind ubiquinone. This chain is NADH-quinone oxidoreductase subunit H, found in Helicobacter pylori (strain ATCC 700392 / 26695) (Campylobacter pylori).